A 243-amino-acid chain; its full sequence is Outer membrane protein A (243 aa).

Beta stranded transmembrane passes span leucine 1–proline 8, leucine 13–glycine 21, proline 47–alanine 56, isoleucine 61–glutamine 68, and leucine 87–arginine 95. 4 tandem repeats follow at residues alanine 107–proline 108, alanine 109–proline 110, alanine 111–proline 112, and alanine 113–proline 114. The 4 X 2 AA tandem repeats of A-P stretch occupies residues alanine 107–proline 114. In terms of domain architecture, OmpA-like spans valine 116–isoleucine 243. Cysteine 217 and cysteine 229 form a disulfide bridge.

Belongs to the outer membrane OOP (TC 1.B.6) superfamily. OmpA family. As to quaternary structure, monomer and homodimer.

It is found in the cell outer membrane. In terms of biological role, with TolR probably plays a role in maintaining the position of the peptidoglycan cell wall in the periplasm. Acts as a porin with low permeability that allows slow penetration of small solutes; an internal gate slows down solute passage. The sequence is that of Outer membrane protein A from Atlantibacter hermannii (Escherichia hermannii).